The sequence spans 387 residues: Chaperone protein DnaJ (387 aa).

A J domain is found at 6–70 (DYYEILGLSR…EKRAQYDRFG (65 aa)). Residues 130–212 (GVRKDIDVPR…CSGTGRVRNT (83 aa)) form a CR-type zinc finger. The Zn(2+) site is built by cysteine 143, cysteine 146, cysteine 160, cysteine 163, cysteine 186, cysteine 189, cysteine 200, and cysteine 203. 4 CXXCXGXG motif repeats span residues 143 to 150 (CSNCSGTG), 160 to 167 (CPTCGGTG), 186 to 193 (CSTCRGKG), and 200 to 207 (CPVCSGTG). A disordered region spans residues 143–162 (CSNCSGTGARPGTSPKRCPT).

Belongs to the DnaJ family. Homodimer. Requires Zn(2+) as cofactor.

The protein localises to the cytoplasm. Functionally, participates actively in the response to hyperosmotic and heat shock by preventing the aggregation of stress-denatured proteins and by disaggregating proteins, also in an autonomous, DnaK-independent fashion. Unfolded proteins bind initially to DnaJ; upon interaction with the DnaJ-bound protein, DnaK hydrolyzes its bound ATP, resulting in the formation of a stable complex. GrpE releases ADP from DnaK; ATP binding to DnaK triggers the release of the substrate protein, thus completing the reaction cycle. Several rounds of ATP-dependent interactions between DnaJ, DnaK and GrpE are required for fully efficient folding. Also involved, together with DnaK and GrpE, in the DNA replication of plasmids through activation of initiation proteins. The chain is Chaperone protein DnaJ from Methanosarcina thermophila.